We begin with the raw amino-acid sequence, 1020 residues long: Contactin-1 (1020 aa).

Positions 1–20 are cleaved as a signal peptide; that stretch reads MKMPLLVSHLLLISLTSCLG. Ig-like C2-type domains are found at residues 41-131, 137-223, 241-326, 331-407, 413-500, and 504-603; these read PIFE…ATLS, PFPP…KSVF, PADI…ARIY, PEWV…AELK, PTFE…GTLV, and PTRI…LVVR. 2 disulfide bridges follow: C65–C114 and C158–C211. 2 N-linked (GlcNAc...) asparagine glycosylation sites follow: N208 and N258. An intrachain disulfide couples C263 to C310. N338 carries N-linked (GlcNAc...) asparagine glycosylation. Disulfide bonds link C352–C391 and C436–C484. Residues N457, N473, N494, and N521 are each glycosylated (N-linked (GlcNAc...) asparagine). A disulfide bridge links C526 with C585. A glycan (N-linked (GlcNAc...) asparagine) is linked at N593. Fibronectin type-III domains are found at residues 608–706, 711–808, 813–908, and 909–1002; these read PPGG…TDGA, APSD…SAQD, APTE…APPS, and QPPR…TLSS. The disordered stretch occupies residues 695–719; the sequence is SIPSNRIKTDGAAPNVAPSDVGGGG. N935 carries an N-linked (GlcNAc...) asparagine glycan. S1001 carries the GPI-anchor amidated serine lipid modification. Positions 1002 to 1020 are cleaved as a propeptide — removed in mature form; that stretch reads SSLLSLLLPSLGFLVYSEF.

The protein belongs to the immunoglobulin superfamily. Contactin family. In terms of assembly, monomer. Interacts with CNTNAP1 in cis form. Binds to the carbonic-anhydrase like domain of PTPRZ1. Interacts with NOTCH1 and TNR. Detected in a complex with NRCAM and PTPRB. Interacts with TASOR. Expressed in the ovary and in Sertoli cells of the testis.

The protein resides in the cell membrane. Functionally, contactins mediate cell surface interactions during nervous system development. Involved in the formation of paranodal axo-glial junctions in myelinated peripheral nerves and in the signaling between axons and myelinating glial cells via its association with CNTNAP1. Participates in oligodendrocytes generation by acting as a ligand of NOTCH1. Its association with NOTCH1 promotes NOTCH1 activation through the released notch intracellular domain (NICD) and subsequent translocation to the nucleus. Interaction with TNR induces a repulsion of neurons and an inhibition of neurite outgrowth. The protein is Contactin-1 (Cntn1) of Mus musculus (Mouse).